We begin with the raw amino-acid sequence, 121 residues long: Basic phospholipase A2 BmjeTX-II (121 aa).

7 disulfide bridges follow: cysteine 26–cysteine 114, cysteine 28–cysteine 45, cysteine 44–cysteine 95, cysteine 50–cysteine 121, cysteine 51–cysteine 88, cysteine 58–cysteine 82, and cysteine 76–cysteine 86. Ca(2+)-binding residues include tyrosine 27, glycine 29, and glycine 31. Histidine 48 is a catalytic residue. A Ca(2+)-binding site is contributed by aspartate 49. Residue aspartate 89 is part of the active site.

Ca(2+) is required as a cofactor. In terms of tissue distribution, expressed by the venom gland.

It localises to the secreted. The catalysed reaction is a 1,2-diacyl-sn-glycero-3-phosphocholine + H2O = a 1-acyl-sn-glycero-3-phosphocholine + a fatty acid + H(+). Its function is as follows. Snake venom phospholipase A2 (PLA2) that induces blockade of neuromuscular contraction in an indirectly stimulated chick biventer cervicis nerve-muscle preparation. Does not inhibit contraction of chick biventer cervicic nerve-muscle preparation in response to treatment with acetylcholine or KCl. The neuromuscular blockade is mediated by inhibitory action at the presynaptic motor nerve endings. Lyses skeletal myoblasts and myotubes in vitro, and intramuscular injection causes local muscle necrosis. Induces edema in the mouse foot pad. Induces a transient increase of IL-6 levels. PLA2 catalyzes the calcium-dependent hydrolysis of the 2-acyl groups in 3-sn-phosphoglycerides. The polypeptide is Basic phospholipase A2 BmjeTX-II (Bothrops marajoensis (Marajo lancehead)).